A 233-amino-acid polypeptide reads, in one-letter code: Lipoprotein-releasing system ATP-binding protein LolD (233 aa).

The region spanning leucine 9–arginine 233 is the ABC transporter domain. Glycine 45–serine 52 is an ATP binding site.

The protein belongs to the ABC transporter superfamily. Lipoprotein translocase (TC 3.A.1.125) family. The complex is composed of two ATP-binding proteins (LolD) and two transmembrane proteins (LolC and LolE).

The protein resides in the cell inner membrane. Functionally, part of the ABC transporter complex LolCDE involved in the translocation of mature outer membrane-directed lipoproteins, from the inner membrane to the periplasmic chaperone, LolA. Responsible for the formation of the LolA-lipoprotein complex in an ATP-dependent manner. This is Lipoprotein-releasing system ATP-binding protein LolD from Shewanella denitrificans (strain OS217 / ATCC BAA-1090 / DSM 15013).